Reading from the N-terminus, the 400-residue chain is Nicotinate phosphoribosyltransferase (400 aa).

The residue at position 220 (His-220) is a Phosphohistidine; by autocatalysis.

This sequence belongs to the NAPRTase family. Transiently phosphorylated on a His residue during the reaction cycle. Phosphorylation strongly increases the affinity for substrates and increases the rate of nicotinate D-ribonucleotide production. Dephosphorylation regenerates the low-affinity form of the enzyme, leading to product release.

The catalysed reaction is nicotinate + 5-phospho-alpha-D-ribose 1-diphosphate + ATP + H2O = nicotinate beta-D-ribonucleotide + ADP + phosphate + diphosphate. It functions in the pathway cofactor biosynthesis; NAD(+) biosynthesis; nicotinate D-ribonucleotide from nicotinate: step 1/1. Catalyzes the synthesis of beta-nicotinate D-ribonucleotide from nicotinate and 5-phospho-D-ribose 1-phosphate at the expense of ATP. This chain is Nicotinate phosphoribosyltransferase, found in Citrobacter koseri (strain ATCC BAA-895 / CDC 4225-83 / SGSC4696).